A 289-amino-acid chain; its full sequence is ATP synthase gamma chain (289 aa).

The protein belongs to the ATPase gamma chain family. F-type ATPases have 2 components, CF(1) - the catalytic core - and CF(0) - the membrane proton channel. CF(1) has five subunits: alpha(3), beta(3), gamma(1), delta(1), epsilon(1). CF(0) has three main subunits: a, b and c.

It is found in the cell inner membrane. Produces ATP from ADP in the presence of a proton gradient across the membrane. The gamma chain is believed to be important in regulating ATPase activity and the flow of protons through the CF(0) complex. The sequence is that of ATP synthase gamma chain from Azorhizobium caulinodans (strain ATCC 43989 / DSM 5975 / JCM 20966 / LMG 6465 / NBRC 14845 / NCIMB 13405 / ORS 571).